A 140-amino-acid polypeptide reads, in one-letter code: Class I hydrophobin C (140 aa).

A signal peptide spans 1-23 (MKFFVPAFLFAATAMALPGSGSA). Cystine bridges form between cysteine 41/cysteine 114, cysteine 49/cysteine 108, cysteine 50/cysteine 85, and cysteine 115/cysteine 133.

This sequence belongs to the fungal hydrophobin family.

Its subcellular location is the secreted. It is found in the cell wall. Aerial growth, conidiation, and dispersal of filamentous fungi in the environment rely upon a capability of their secreting small amphipathic proteins called hydrophobins (HPBs) with low sequence identity. Class I can self-assemble into an outermost layer of rodlet bundles on aerial cell surfaces, conferring cellular hydrophobicity that supports fungal growth, development and dispersal; whereas Class II form highly ordered films at water-air interfaces through intermolecular interactions but contribute nothing to the rodlet structure. In P.expansum, hydrophobins contribute to germination, tolerance to cold stress and mycotoxins patulin and citrinin production. HfbC is involved in the virulence on apple. The protein is Class I hydrophobin C of Penicillium expansum (Blue mold rot fungus).